We begin with the raw amino-acid sequence, 274 residues long: NH(3)-dependent NAD(+) synthetase (274 aa).

46–53 (GISGGQDS) lines the ATP pocket. Position 52 (Asp52) interacts with Mg(2+). Position 140 (Arg140) interacts with deamido-NAD(+). Residue Thr160 participates in ATP binding. Glu165 provides a ligand contact to Mg(2+). Deamido-NAD(+) contacts are provided by Lys173 and Asp180. Residues Lys189 and Thr211 each coordinate ATP. Residue 260 to 261 (HK) coordinates deamido-NAD(+).

This sequence belongs to the NAD synthetase family. Homodimer.

The enzyme catalyses deamido-NAD(+) + NH4(+) + ATP = AMP + diphosphate + NAD(+) + H(+). It functions in the pathway cofactor biosynthesis; NAD(+) biosynthesis; NAD(+) from deamido-NAD(+) (ammonia route): step 1/1. In terms of biological role, catalyzes the ATP-dependent amidation of deamido-NAD to form NAD. Uses ammonia as a nitrogen source. The protein is NH(3)-dependent NAD(+) synthetase of Listeria welshimeri serovar 6b (strain ATCC 35897 / DSM 20650 / CCUG 15529 / CIP 8149 / NCTC 11857 / SLCC 5334 / V8).